The sequence spans 637 residues: 1-deoxy-D-xylulose-5-phosphate synthase (637 aa).

Thiamine diphosphate-binding positions include His76 and 117-119 (GHS). Asp148 is a Mg(2+) binding site. Residues 149–150 (GA), Asn177, Tyr294, and Glu381 each bind thiamine diphosphate. Asn177 serves as a coordination point for Mg(2+).

It belongs to the transketolase family. DXPS subfamily. As to quaternary structure, homodimer. Mg(2+) serves as cofactor. Requires thiamine diphosphate as cofactor.

It carries out the reaction D-glyceraldehyde 3-phosphate + pyruvate + H(+) = 1-deoxy-D-xylulose 5-phosphate + CO2. It functions in the pathway metabolic intermediate biosynthesis; 1-deoxy-D-xylulose 5-phosphate biosynthesis; 1-deoxy-D-xylulose 5-phosphate from D-glyceraldehyde 3-phosphate and pyruvate: step 1/1. Catalyzes the acyloin condensation reaction between C atoms 2 and 3 of pyruvate and glyceraldehyde 3-phosphate to yield 1-deoxy-D-xylulose-5-phosphate (DXP). This chain is 1-deoxy-D-xylulose-5-phosphate synthase, found in Neisseria gonorrhoeae (strain ATCC 700825 / FA 1090).